We begin with the raw amino-acid sequence, 443 residues long: MFLAQEIIRKKRNGLALSSEEIQFFVQGITTNSVSEGQIAALGMAVYFNDMNMDERIALTTAMRDSGTVLNWQSLGLNGPVIDKHSTGGVGDVISLMLGPMAAACGGYVPMISGRGLGHTGGTLDKFDAIQGYQTEPSSELFRKVVKEVGVAIIGQTGDLVPADKRFYSIRDNTATVESISLITASILSKKLACNLDALAMDVKVGSGAFMPTYEASEELARSIAAVANGAGTKTTALLTDMNQVLASCAGNAVEVKEAIDFLTGAYRNPRLYEVTMGLCAEMLLLGGLASNEADARAKLNRVLDNGRAAELFGKMVSGLGGPVDFVENYSKYLPQSQIIRPVFADMQGYAYSMDTRELGLAVVTLGGGRRKPGDTLDYSVGLTQVCALGDKVDSSTPIAVIHAQSEAAFAEAELAVKKAIHIGETAPEKTPEIYAYIRASDL.

It belongs to the thymidine/pyrimidine-nucleoside phosphorylase family. As to quaternary structure, homodimer.

It catalyses the reaction thymidine + phosphate = 2-deoxy-alpha-D-ribose 1-phosphate + thymine. It participates in pyrimidine metabolism; dTMP biosynthesis via salvage pathway; dTMP from thymine: step 1/2. Functionally, the enzymes which catalyze the reversible phosphorolysis of pyrimidine nucleosides are involved in the degradation of these compounds and in their utilization as carbon and energy sources, or in the rescue of pyrimidine bases for nucleotide synthesis. In Shewanella baltica (strain OS195), this protein is Thymidine phosphorylase.